The primary structure comprises 230 residues: Small ribosomal subunit protein uS3 (230 aa).

Residues 39–107 (IRKFLTEKLK…PAQINISEVR (69 aa)) form the KH type-2 domain.

This sequence belongs to the universal ribosomal protein uS3 family. Part of the 30S ribosomal subunit. Forms a tight complex with proteins S10 and S14.

Its function is as follows. Binds the lower part of the 30S subunit head. Binds mRNA in the 70S ribosome, positioning it for translation. The sequence is that of Small ribosomal subunit protein uS3 from Psychromonas ingrahamii (strain DSM 17664 / CCUG 51855 / 37).